Consider the following 134-residue polypeptide: Acyl carrier protein, chloroplastic (134 aa).

A chloroplast-targeting transit peptide spans 1–51 (MSTTFCSSVSMQATSLAATTRISFQKPGLVSRTNLSFNLRRSIPTRLSVSC). Residues 55–130 (PETVEKVSKI…EAAELIEELV (76 aa)) form the Carrier domain. Residue Ser-90 is modified to O-(pantetheine 4'-phosphoryl)serine.

The protein belongs to the acyl carrier protein (ACP) family. 4'-phosphopantetheine is transferred from CoA to a specific serine of apo-ACP by acpS. This modification is essential for activity because fatty acids are bound in thioester linkage to the sulfhydryl of the prosthetic group. Seed.

It localises to the plastid. Its subcellular location is the chloroplast. It participates in lipid metabolism; fatty acid biosynthesis. Functionally, carrier of the growing fatty acid chain in fatty acid biosynthesis. This Brassica napus (Rape) protein is Acyl carrier protein, chloroplastic (ACL1.A2).